A 274-amino-acid chain; its full sequence is Dermonecrotic toxin SdSicTox-betaIIB1biv (274 aa).

Residue H5 is part of the active site. Residues E25 and D27 each contribute to the Mg(2+) site. H41 acts as the Nucleophile in catalysis. 2 cysteine pairs are disulfide-bonded: C45–C51 and C47–C190. D85 contacts Mg(2+).

The protein belongs to the arthropod phospholipase D family. Class II subfamily. It depends on Mg(2+) as a cofactor. Expressed by the venom gland.

It localises to the secreted. It catalyses the reaction an N-(acyl)-sphingosylphosphocholine = an N-(acyl)-sphingosyl-1,3-cyclic phosphate + choline. It carries out the reaction an N-(acyl)-sphingosylphosphoethanolamine = an N-(acyl)-sphingosyl-1,3-cyclic phosphate + ethanolamine. The catalysed reaction is a 1-acyl-sn-glycero-3-phosphocholine = a 1-acyl-sn-glycero-2,3-cyclic phosphate + choline. The enzyme catalyses a 1-acyl-sn-glycero-3-phosphoethanolamine = a 1-acyl-sn-glycero-2,3-cyclic phosphate + ethanolamine. Functionally, dermonecrotic toxins cleave the phosphodiester linkage between the phosphate and headgroup of certain phospholipids (sphingolipid and lysolipid substrates), forming an alcohol (often choline) and a cyclic phosphate. This toxin acts on sphingomyelin (SM). It may also act on ceramide phosphoethanolamine (CPE), lysophosphatidylcholine (LPC) and lysophosphatidylethanolamine (LPE), but not on lysophosphatidylserine (LPS), and lysophosphatidylglycerol (LPG). It acts by transphosphatidylation, releasing exclusively cyclic phosphate products as second products. Induces dermonecrosis, hemolysis, increased vascular permeability, edema, inflammatory response, and platelet aggregation. In Sicarius cf. damarensis (strain GJB-2008) (Six-eyed sand spider), this protein is Dermonecrotic toxin SdSicTox-betaIIB1biv.